Consider the following 349-residue polypeptide: Phosphorylcholine phosphatase (349 aa).

An N-terminal signal peptide occupies residues 1-22; the sequence is MTFAKGILAALALAAAVGQASA. Catalysis depends on D53, which acts as the Nucleophile. Positions 53 and 55 each coordinate Mg(2+). The active-site Proton donor is D55. A disulfide bond links C109 and C116. Mg(2+) is bound at residue D284.

This sequence belongs to the HAD-like hydrolase superfamily. In terms of assembly, monomer. Homodimer. Homotetramer. It depends on Mg(2+) as a cofactor.

It is found in the periplasm. The catalysed reaction is phosphocholine + H2O = choline + phosphate. It carries out the reaction phosphoethanolamine + H2O = ethanolamine + phosphate. Its activity is regulated as follows. Activity is inhibited by high concentrations of phosphorylcholine, phosphorylethanolamine, choline or betaine. Displays different properties depending on the substrate utilized, the pH conditions as well as the presence or absence of metal ions. At pH 5, activity is inhibited by Al(3+) ions. At pH 7.4, the enzyme cannot catalyze the hydrolysis of pNPP, phosphorylethanolamine is a poor substrate in either the presence or absence of divalent cations, and activity measured with phosphorylcholine is independent of divalent cations or is not inhibited by Al(3+) ions. Mg(2+) produces identical activation at pH 5.0 and 7.4, but Zn(2+) is an activator at pH 5.0 and becomes an inhibitor at pH 7.4. This inhibition at pH 7.4 may be due to a transition from octahedral to tetrahedral coordination geometry, which is produced by hydrolysis of the Zn-hexacoordinated complex. Its function is as follows. Catalyzes the hydrolysis of phosphorylcholine (PCho) to produce choline and inorganic phosphate. Can also hydrolyze phosphorylethanolamine and the nonphysiological substrate p-nitrophenylphosphate (pNPP). Shows higher affinity and catalytic efficiency with phosphorylcholine as substrate. Is probably involved in virulence. The bacteria may break down various host compounds or host cell membranes through the coordinated action of phospholipase C and phosphocholine phosphatase. The final consequence of the action of these enzymes is an increase of the free choline concentration, which may promote the pathogenicity of P.aeruginosa. This is Phosphorylcholine phosphatase from Pseudomonas aeruginosa (strain ATCC 15692 / DSM 22644 / CIP 104116 / JCM 14847 / LMG 12228 / 1C / PRS 101 / PAO1).